A 308-amino-acid chain; its full sequence is Aspartate carbamoyltransferase catalytic subunit (308 aa).

Carbamoyl phosphate contacts are provided by arginine 57 and threonine 58. Residue lysine 86 coordinates L-aspartate. 3 residues coordinate carbamoyl phosphate: arginine 107, histidine 135, and glutamine 138. Residues arginine 168 and arginine 229 each coordinate L-aspartate. The carbamoyl phosphate site is built by leucine 268 and proline 269.

It belongs to the aspartate/ornithine carbamoyltransferase superfamily. ATCase family. Heterooligomer of catalytic and regulatory chains.

It carries out the reaction carbamoyl phosphate + L-aspartate = N-carbamoyl-L-aspartate + phosphate + H(+). It participates in pyrimidine metabolism; UMP biosynthesis via de novo pathway; (S)-dihydroorotate from bicarbonate: step 2/3. In terms of biological role, catalyzes the condensation of carbamoyl phosphate and aspartate to form carbamoyl aspartate and inorganic phosphate, the committed step in the de novo pyrimidine nucleotide biosynthesis pathway. The sequence is that of Aspartate carbamoyltransferase catalytic subunit from Thermococcus gammatolerans (strain DSM 15229 / JCM 11827 / EJ3).